Reading from the N-terminus, the 403-residue chain is Cell cycle checkpoint control protein RAD9B (403 aa).

A disordered region spans residues 285-347 (PLSQARRSHP…ASAGQDDIFE (63 aa)). Phosphoserine is present on residues Ser-354 and Ser-363.

This sequence belongs to the rad9 family. Interacts with HUS1, HUS1B, RAD1, RAD9A and RAD17.

The sequence is that of Cell cycle checkpoint control protein RAD9B (Rad9b) from Mus musculus (Mouse).